The following is a 228-amino-acid chain: MPVKGGTKCIKYLLFGFNFIFWLAGIAVLAIGLWLRFDSQTKSIFEQETNNNNSSFYTGVYILIGAGALMMLVGFLGCCGAVQESQCMLGLFFGFLLVIFAIEIAAAIWGYSHKDEVIKEVQEFYKDTYNKLKTKDEPQRETLKAIHYALNCCGLAGGVEQFISDICPKKDVLETFTVKSCPDAIKEVFDNKFHIIGAVGIGIAVVMIFGMIFSMILCCAIRRNREMV.

Residues Pro-2–Tyr-12 lie on the Cytoplasmic side of the membrane. Residue Cys-9 is the site of S-palmitoyl cysteine attachment. The chain crosses the membrane as a helical span at residues Leu-13–Leu-33. The Extracellular portion of the chain corresponds to Trp-34–Ser-55. N-linked (GlcNAc...) asparagine glycosylation is found at Asn-52 and Asn-53. Residues Phe-56–Leu-76 traverse the membrane as a helical segment. Residues Gly-77–Cys-87 lie on the Cytoplasmic side of the membrane. S-palmitoyl cysteine attachment occurs at residues Cys-78, Cys-79, and Cys-87. The helical transmembrane segment at Met-88–Tyr-111 threads the bilayer. The Extracellular segment spans residues Ser-112–Ile-195. Disulfide bonds link Cys-152–Cys-181 and Cys-153–Cys-167. The chain crosses the membrane as a helical span at residues Ile-196–Ile-221. Residues Cys-218 and Cys-219 are each lipidated (S-palmitoyl cysteine). The Cytoplasmic segment spans residues Arg-222–Val-228.

This sequence belongs to the tetraspanin (TM4SF) family. As to quaternary structure, forms both disulfide-linked homodimers and higher homooligomers as well as heterooligomers with other members of the tetraspanin family. Interacts (via the second extracellular domain) with integrin ITGAV:ITGB3. Interacts with integrin ITGA6:ITGB1; interaction takes place in oocytes and is involved in sperm-egg fusion. Part of integrin-tetraspanin complexes composed of CD81, beta-1 and beta-2 integrins in the membrane of monocyte/macrophages. Interacts with CD63; identified in a complex with CD63 and ITGB3. Associates with CR2/CD21 and with PTGFRN/CD9P1. Part of a complex composed of CD9, CD81, PTGFRN and IGSF8. Interacts directly with IGSF8. Interacts with PDPN; this interaction is homophilic and attenuates platelet aggregation and pulmonary metastasis induced by PDPN. Interacts (on T cell side) with CD81 at immunological synapses between antigen-presenting cells and T cells. Palmitoylated at a low, basal level in unstimulated platelets. The level of palmitoylation increases when platelets are activated by thrombin (in vitro). The protein exists in three forms with molecular masses between 22 and 27 kDa, and is known to carry covalently linked fatty acids. Palmitoylation by ZDHHC2 regulates CD9 expression, association with other tetraspanin family proteins and function in cell adhesion. As to expression, detected in platelets (at protein level). Expressed by a variety of hematopoietic and epithelial cells.

The protein resides in the cell membrane. The protein localises to the membrane. It localises to the secreted. Its subcellular location is the extracellular exosome. Functionally, integral membrane protein associated with integrins, which regulates different processes, such as sperm-egg fusion, platelet activation and aggregation, and cell adhesion. Present at the cell surface of oocytes and plays a key role in sperm-egg fusion, possibly by organizing multiprotein complexes and the morphology of the membrane required for the fusion. In myoblasts, associates with CD81 and PTGFRN and inhibits myotube fusion during muscle regeneration. In macrophages, associates with CD81 and beta-1 and beta-2 integrins, and prevents macrophage fusion into multinucleated giant cells specialized in ingesting complement-opsonized large particles. Also prevents the fusion between mononuclear cell progenitors into osteoclasts in charge of bone resorption. Acts as a receptor for PSG17. Involved in platelet activation and aggregation. Regulates paranodal junction formation. Involved in cell adhesion, cell motility and tumor metastasis. The protein is CD9 antigen of Homo sapiens (Human).